Reading from the N-terminus, the 237-residue chain is tRNA1(Val) (adenine(37)-N6)-methyltransferase (237 aa).

The protein belongs to the methyltransferase superfamily. tRNA (adenine-N(6)-)-methyltransferase family.

Its subcellular location is the cytoplasm. It carries out the reaction adenosine(37) in tRNA1(Val) + S-adenosyl-L-methionine = N(6)-methyladenosine(37) in tRNA1(Val) + S-adenosyl-L-homocysteine + H(+). Its function is as follows. Specifically methylates the adenine in position 37 of tRNA(1)(Val) (anticodon cmo5UAC). This is tRNA1(Val) (adenine(37)-N6)-methyltransferase from Bacteroides thetaiotaomicron (strain ATCC 29148 / DSM 2079 / JCM 5827 / CCUG 10774 / NCTC 10582 / VPI-5482 / E50).